The sequence spans 100 residues: uncharacterized protein (100 aa).

The segment at 42–84 (PGEPWRTAGGIGEGGAGGDGAAAGGEGDVHGRPAGAEDGEDGA) is disordered. Positions 50 to 67 (GGIGEGGAGGDGAAAGGE) are enriched in gly residues.

This is an uncharacterized protein from Torque teno tamarin virus (isolate So-TTV2).